The following is a 178-amino-acid chain: Cytidylate kinase 2 (178 aa).

An ATP-binding site is contributed by 7 to 15 (GKSGCGNTT).

This sequence belongs to the cytidylate kinase family. Type 2 subfamily.

The protein resides in the cytoplasm. The catalysed reaction is CMP + ATP = CDP + ADP. It carries out the reaction dCMP + ATP = dCDP + ADP. In Borrelia garinii subsp. bavariensis (strain ATCC BAA-2496 / DSM 23469 / PBi) (Borreliella bavariensis), this protein is Cytidylate kinase 2.